We begin with the raw amino-acid sequence, 517 residues long: Cytochrome P450 1A1 (517 aa).

The mitochondrial targeting signal stretch occupies residues 34 to 45; it reads WQPRVPKGLKSP. A glycan (O-linked (GlcNAc) serine) is linked at S72. Residue F229 participates in substrate binding. Residue C462 participates in heme binding.

The protein belongs to the cytochrome P450 family. In terms of assembly, interacts with cytosolic chaperones HSP70 and HSP90; this interaction is required for initial targeting to mitochondria. Interacts (via mitochondrial targeting signal) with TOMM40 (via N-terminus); this interaction is required for translocation across the mitochondrial outer membrane. Heme is required as a cofactor.

Its subcellular location is the endoplasmic reticulum membrane. It is found in the mitochondrion inner membrane. It localises to the microsome membrane. The protein localises to the cytoplasm. The catalysed reaction is an organic molecule + reduced [NADPH--hemoprotein reductase] + O2 = an alcohol + oxidized [NADPH--hemoprotein reductase] + H2O + H(+). It catalyses the reaction estrone + reduced [NADPH--hemoprotein reductase] + O2 = 2-hydroxyestrone + oxidized [NADPH--hemoprotein reductase] + H2O + H(+). It carries out the reaction estrone + reduced [NADPH--hemoprotein reductase] + O2 = 4-hydroxyestrone + oxidized [NADPH--hemoprotein reductase] + H2O + H(+). The enzyme catalyses estrone + reduced [NADPH--hemoprotein reductase] + O2 = 6alpha-hydroxyestrone + oxidized [NADPH--hemoprotein reductase] + H2O + H(+). The catalysed reaction is estrone + reduced [NADPH--hemoprotein reductase] + O2 = 15alpha-hydroxyestrone + oxidized [NADPH--hemoprotein reductase] + H2O + H(+). It catalyses the reaction estrone + reduced [NADPH--hemoprotein reductase] + O2 = 16alpha-hydroxyestrone + oxidized [NADPH--hemoprotein reductase] + H2O + H(+). It carries out the reaction 17beta-estradiol + reduced [NADPH--hemoprotein reductase] + O2 = 2-hydroxy-17beta-estradiol + oxidized [NADPH--hemoprotein reductase] + H2O + H(+). The enzyme catalyses 17beta-estradiol + reduced [NADPH--hemoprotein reductase] + O2 = 4-hydroxy-17beta-estradiol + oxidized [NADPH--hemoprotein reductase] + H2O + H(+). The catalysed reaction is 17beta-estradiol + reduced [NADPH--hemoprotein reductase] + O2 = 6alpha-hydroxy-17beta-estradiol + oxidized [NADPH--hemoprotein reductase] + H2O + H(+). It catalyses the reaction 17beta-estradiol + reduced [NADPH--hemoprotein reductase] + O2 = 7alpha-hydroxy-17beta-estradiol + oxidized [NADPH--hemoprotein reductase] + H2O + H(+). It carries out the reaction 17beta-estradiol + reduced [NADPH--hemoprotein reductase] + O2 = 15alpha-hydroxy-17beta-estradiol + oxidized [NADPH--hemoprotein reductase] + H2O + H(+). The enzyme catalyses (5Z,8Z,11Z)-eicosatrienoate + reduced [NADPH--hemoprotein reductase] + O2 = 19-hydroxy-(5Z,8Z,11Z)-eicosatrienoate + oxidized [NADPH--hemoprotein reductase] + H2O + H(+). The catalysed reaction is (5Z,8Z,11Z,14Z)-eicosatetraenoate + reduced [NADPH--hemoprotein reductase] + O2 = 16-hydroxy-(5Z,8Z,11Z,14Z)-eicosatetraenoate + oxidized [NADPH--hemoprotein reductase] + H2O + H(+). It catalyses the reaction (5Z,8Z,11Z,14Z)-eicosatetraenoate + reduced [NADPH--hemoprotein reductase] + O2 = 17-hydroxy-(5Z,8Z,11Z,14Z)-eicosatetraenoate + oxidized [NADPH--hemoprotein reductase] + H2O + H(+). It carries out the reaction (5Z,8Z,11Z,14Z)-eicosatetraenoate + reduced [NADPH--hemoprotein reductase] + O2 = 18-hydroxy-(5Z,8Z,11Z,14Z)-eicosatetraenoate + oxidized [NADPH--hemoprotein reductase] + H2O + H(+). The enzyme catalyses (5Z,8Z,11Z,14Z)-eicosatetraenoate + reduced [NADPH--hemoprotein reductase] + O2 = 19-hydroxy-(5Z,8Z,11Z,14Z)-eicosatetraenoate + oxidized [NADPH--hemoprotein reductase] + H2O + H(+). The catalysed reaction is (5Z,8Z,11Z,14Z,17Z)-eicosapentaenoate + reduced [NADPH--hemoprotein reductase] + O2 = 19-hydroxy-(5Z,8Z,11Z,14Z,17Z)-eicosapentaenoate + oxidized [NADPH--hemoprotein reductase] + H2O + H(+). It catalyses the reaction (5Z,8Z,11Z,14Z)-eicosatetraenoate + reduced [NADPH--hemoprotein reductase] + O2 = (8R,9S)-epoxy-(5Z,11Z,14Z)-eicosatrienoate + oxidized [NADPH--hemoprotein reductase] + H2O + H(+). It carries out the reaction (5Z,8Z,11Z,14Z)-eicosatetraenoate + reduced [NADPH--hemoprotein reductase] + O2 = (11R,12S)-epoxy-(5Z,8Z,14Z)-eicosatrienoate + oxidized [NADPH--hemoprotein reductase] + H2O + H(+). The enzyme catalyses (5Z,8Z,11Z,14Z)-eicosatetraenoate + reduced [NADPH--hemoprotein reductase] + O2 = (14S,15R)-epoxy-(5Z,8Z,11Z)-eicosatrienoate + oxidized [NADPH--hemoprotein reductase] + H2O + H(+). The catalysed reaction is (5Z,8Z,11Z,14Z)-eicosatetraenoate + reduced [NADPH--hemoprotein reductase] + O2 = (14R,15S)-epoxy-(5Z,8Z,11Z)-eicosatrienoate + oxidized [NADPH--hemoprotein reductase] + H2O + H(+). It catalyses the reaction (5Z,8Z,11Z,14Z,17Z)-eicosapentaenoate + reduced [NADPH--hemoprotein reductase] + O2 = (17R,18S)-epoxy-(5Z,8Z,11Z,14Z)-eicosatetraenoate + oxidized [NADPH--hemoprotein reductase] + H2O + H(+). It carries out the reaction (4Z,7Z,10Z,13Z,16Z,19Z)-docosahexaenoate + reduced [NADPH--hemoprotein reductase] + O2 = (19S,20R)-epoxy-(4Z,7Z,10Z,13Z,16Z)-docosapentaenoate + oxidized [NADPH--hemoprotein reductase] + H2O + H(+). The enzyme catalyses (4Z,7Z,10Z,13Z,16Z,19Z)-docosahexaenoate + reduced [NADPH--hemoprotein reductase] + O2 = (19R,20S)-epoxy-(4Z,7Z,10Z,13Z,16Z)-docosapentaenoate + oxidized [NADPH--hemoprotein reductase] + H2O + H(+). The catalysed reaction is all-trans-retinol + reduced [NADPH--hemoprotein reductase] + O2 = all-trans-retinal + oxidized [NADPH--hemoprotein reductase] + 2 H2O + H(+). It catalyses the reaction all-trans-retinal + reduced [NADPH--hemoprotein reductase] + O2 = all-trans-retinoate + oxidized [NADPH--hemoprotein reductase] + H2O + 2 H(+). It carries out the reaction (13S)-hydroperoxy-(9Z,11E)-octadecadienoate = 13-oxo-(9Z,11E)-octadecadienoate + H2O. The enzyme catalyses (12S)-hydroperoxy-(5Z,8Z,10E,14Z)-eicosatetraenoate = 12-oxo-(5Z,8Z,10E,14Z)-eicosatetraenoate + H2O. The catalysed reaction is (15S)-hydroperoxy-(5Z,8Z,11Z,13E)-eicosatetraenoate = 15-oxo-(5Z,8Z,11Z,13E)-eicosatetraenoate + H2O. It catalyses the reaction (5S)-hydroperoxy-(6E,8Z,11Z,14Z)-eicosatetraenoate = 5-oxo-(6E,8Z,11Z,14Z)-eicosatetraenoate + H2O. It functions in the pathway steroid hormone biosynthesis. The protein operates within lipid metabolism; fatty acid metabolism. It participates in cofactor metabolism; retinol metabolism. A cytochrome P450 monooxygenase involved in the metabolism of various endogenous substrates, including fatty acids, steroid hormones and vitamins. Mechanistically, uses molecular oxygen inserting one oxygen atom into a substrate, and reducing the second into a water molecule, with two electrons provided by NADPH via cytochrome P450 reductase (CPR; NADPH-ferrihemoprotein reductase). Catalyzes the hydroxylation of carbon-hydrogen bonds. Exhibits high catalytic activity for the formation of hydroxyestrogens from estrone (E1) and 17beta-estradiol (E2), namely 2-hydroxy E1 and E2, as well as D-ring hydroxylated E1 and E2 at the C15alpha and C16alpha positions. Displays different regioselectivities for polyunsaturated fatty acids (PUFA) hydroxylation. Catalyzes the epoxidation of double bonds of certain PUFA. Converts arachidonic acid toward epoxyeicosatrienoic acid (EET) regioisomers, 8,9-, 11,12-, and 14,15-EET, that function as lipid mediators in the vascular system. Displays an absolute stereoselectivity in the epoxidation of eicosapentaenoic acid (EPA) producing the 17(R),18(S) enantiomer. May play an important role in all-trans retinoic acid biosynthesis in extrahepatic tissues. Catalyzes two successive oxidative transformation of all-trans retinol to all-trans retinal and then to the active form all-trans retinoic acid. May also participate in eicosanoids metabolism by converting hydroperoxide species into oxo metabolites (lipoxygenase-like reaction, NADPH-independent). The sequence is that of Cytochrome P450 1A1 (CYP1A1) from Felis catus (Cat).